The following is a 172-amino-acid chain: Protein GrpE (172 aa).

A disordered region spans residues 1–24; the sequence is MNQDHPEFDSEDLAQNPPETDPLK.

The protein belongs to the GrpE family. As to quaternary structure, homodimer.

It localises to the cytoplasm. Functionally, participates actively in the response to hyperosmotic and heat shock by preventing the aggregation of stress-denatured proteins, in association with DnaK and GrpE. It is the nucleotide exchange factor for DnaK and may function as a thermosensor. Unfolded proteins bind initially to DnaJ; upon interaction with the DnaJ-bound protein, DnaK hydrolyzes its bound ATP, resulting in the formation of a stable complex. GrpE releases ADP from DnaK; ATP binding to DnaK triggers the release of the substrate protein, thus completing the reaction cycle. Several rounds of ATP-dependent interactions between DnaJ, DnaK and GrpE are required for fully efficient folding. This Xanthomonas oryzae pv. oryzae (strain PXO99A) protein is Protein GrpE.